A 343-amino-acid chain; its full sequence is Heat-inducible transcription repressor HrcA (343 aa).

The protein belongs to the HrcA family.

Negative regulator of class I heat shock genes (grpE-dnaK-dnaJ and groELS operons). Prevents heat-shock induction of these operons. The protein is Heat-inducible transcription repressor HrcA of Lysinibacillus sphaericus (Bacillus sphaericus).